The following is a 768-amino-acid chain: P-selectin (768 aa).

The first 41 residues, 1–41 (MAGCPKGSWTPRLRSVILGGAQLIWFSALISELVNQKEVAA), serve as a signal peptide directing secretion. Topologically, residues 42–709 (WTYNYSTKAY…QAGTLTIQEA (668 aa)) are extracellular. The region spanning 58–158 (VFCRRHFTDL…PCFKRKRALC (101 aa)) is the C-type lectin domain. 21 disulfide bridges follow: Cys60-Cys158, Cys131-Cys150, Cys163-Cys174, Cys168-Cys183, Cys185-Cys194, Cys200-Cys244, Cys230-Cys257, Cys262-Cys306, Cys292-Cys319, Cys324-Cys368, Cys354-Cys381, Cys386-Cys430, Cys416-Cys443, Cys448-Cys492, Cys478-Cys505, Cys510-Cys554, Cys540-Cys567, Cys580-Cys624, Cys610-Cys637, Cys642-Cys686, and Cys672-Cys699. Ca(2+)-binding residues include Glu121, Asn123, and Asn124. Residue Asn123 participates in a carbohydrate binding. Glu133 and Asn146 together coordinate a carbohydrate. Asn146 and Asp147 together coordinate Ca(2+). Residues 159 to 195 (YTASCQDMSCSNQGECIETIGSYTCSCYPGFYGPECE) form the EGF-like domain. Sushi domains lie at 198-259 (KECG…KCDA), 260-321 (VQCQ…TCEA), 322-383 (IACE…FCEA), 384-445 (LQCP…ECQA), 446-507 (VSCA…TCEA), 508-569 (IKCP…TCKG), 578-639 (VRCP…MCRA), and 640-701 (VKCS…TCQA). Asn398 carries N-linked (GlcNAc...) asparagine glycosylation. An N-linked (GlcNAc...) asparagine glycan is attached at Asn603. N-linked (GlcNAc...) asparagine glycans are attached at residues Asn654, Asn661, and Asn679. Residues 710-733 (LTYLGGAVASTTGLAVGGTLLALL) traverse the membrane as a helical segment. The Cytoplasmic portion of the chain corresponds to 734–768 (RKRLRKKDDGKCPLNPHSHLGTYGVFTNAAYDPTP). Cys745 carries the S-palmitoyl cysteine; alternate lipid modification. Cys745 carries the S-stearoyl cysteine; alternate lipid modification. An Endocytosis signal motif is present at residues 756 to 759 (YGVF). The segment at 759-768 (FTNAAYDPTP) is interaction with SNX17.

This sequence belongs to the selectin/LECAM family. In terms of assembly, interacts with SNX17. Interacts with SELPLG/PSGL1 and PODXL2 and mediates neutrophil adhesion and leukocyte rolling. This interaction requires the sialyl-Lewis X epitope of SELPLG and PODXL2, and specific tyrosine sulfation on SELPLG. Interacts (via C-type lectin domain) with alpha-IIb/beta3 integrin ITGA2B:ITGB3 and alpha-V/beta-3 integrin ITGAV:ITGB3. Interacts with alpha5/beta1 integrin ITGA5:ITGB1 and alpha4/beta1 integrin ITGA4:ITGB. In terms of tissue distribution, stored in the alpha-granules of platelets and Weibel-Palade bodies of endothelial cells. Upon cell activation by agonists, P-selectin is transported rapidly to the cell surface.

It is found in the cell membrane. Ca(2+)-dependent receptor for myeloid cells that binds to carbohydrates on neutrophils and monocytes. Mediates the interaction of activated endothelial cells or platelets with leukocytes. The ligand recognized is sialyl-Lewis X. Mediates rapid rolling of leukocyte rolling over vascular surfaces during the initial steps in inflammation through interaction with SELPLG. Mediates cell-cell interactions and cell adhesion via the interaction with integrin alpha-IIb/beta3 (ITGA2B:ITGB3) and integrin alpha-V/beta-3 (ITGAV:ITGB3). This is P-selectin (Selp) from Mus musculus (Mouse).